The following is a 569-amino-acid chain: MSRKQLALFEPVLLVQALTDAVKKLSPRAQWRNPVMFVVWAGSVLATLLTLAMVTGQIAGSALFTGVISLWLWFTVLFANFAEALAEGRSKAQANSLKGVKKTAFARRLRAPRHDAQADNVPAAELRKGDIVLVKAGDIIPCDGEVIEGGASVDESAITGESAPVIRESGGDFASVTGGRAVEAAGDVDVLLLDKTGTITLGNRQASDFIPARGVDERTLADAAQLASLADETPEGRSIVILAKQRFNLRERDVQSLHATFVPFTAQSRMSGINIDNRMIRKGSVDAIRRHVESNGGHFPADVEQNVENVARLGATPLVVVEGARVLGVIALKDIVKGGIKERFAQLRKMGIKTVMITGDNRLTAAAIAAEAGVDDFLAEATPEAKLALIRQYQAEGRLVAMTGDGTNDAPALAQADVAVAMNSGTQAAKEAGNMVDLDSNPTKLIEVVHIGKQMLMTRGSLTTFSIANDVAKYFAIIPAAFAATYPQLNALNVMGLHSPNSAILSAVIFNALIIIFLIPLALKGVSYKPLSASAMLRRNLWIYGLGGLVVPFIGIKVIDVLLTLLDLA.

2 consecutive transmembrane segments (helical) span residues 34 to 54 (PVMF…LAMV) and 58 to 78 (IAGS…TVLF). Aspartate 194 acts as the 4-aspartylphosphate intermediate in catalysis. ATP contacts are provided by residues aspartate 231, glutamate 235, 264-271 (FTAQSRMS), and lysine 282. Aspartate 405 and aspartate 409 together coordinate Mg(2+). A run of 3 helical transmembrane segments spans residues 475-495 (FAII…LNVM), 503-523 (AILS…PLAL), and 543-563 (IYGL…DVLL).

It belongs to the cation transport ATPase (P-type) (TC 3.A.3) family. Type IA subfamily. In terms of assembly, the system is composed of three essential subunits: KdpA, KdpB and KdpC.

The protein localises to the cell inner membrane. It carries out the reaction K(+)(out) + ATP + H2O = K(+)(in) + ADP + phosphate + H(+). Part of the high-affinity ATP-driven potassium transport (or Kdp) system, which catalyzes the hydrolysis of ATP coupled with the electrogenic transport of potassium into the cytoplasm. This subunit is responsible for energy coupling to the transport system and for the release of the potassium ions to the cytoplasm. This Salmonella typhi protein is Putative potassium-transporting ATPase ATP-binding subunit.